Reading from the N-terminus, the 187-residue chain is UPF0340 protein SPD_0576 (187 aa).

Belongs to the UPF0340 family.

This Streptococcus pneumoniae serotype 2 (strain D39 / NCTC 7466) protein is UPF0340 protein SPD_0576.